The sequence spans 360 residues: Phospho-N-acetylmuramoyl-pentapeptide-transferase (360 aa).

10 consecutive transmembrane segments (helical) span residues 25–45, 74–94, 97–117, 134–154, 168–188, 199–219, 236–256, 263–283, 288–308, and 339–359; these read RAIL…PWVI, MGGA…SDFG, YVWV…VDDY, YFWQ…TAQA, VALN…VGTS, GLAI…AYLA, AGEL…FLWF, VFMG…VAVI, FVLF…ILQV, and IVRF…TLKF.

The protein belongs to the glycosyltransferase 4 family. MraY subfamily. Requires Mg(2+) as cofactor.

It is found in the cell inner membrane. It carries out the reaction UDP-N-acetyl-alpha-D-muramoyl-L-alanyl-gamma-D-glutamyl-meso-2,6-diaminopimeloyl-D-alanyl-D-alanine + di-trans,octa-cis-undecaprenyl phosphate = di-trans,octa-cis-undecaprenyl diphospho-N-acetyl-alpha-D-muramoyl-L-alanyl-D-glutamyl-meso-2,6-diaminopimeloyl-D-alanyl-D-alanine + UMP. Its pathway is cell wall biogenesis; peptidoglycan biosynthesis. Its function is as follows. Catalyzes the initial step of the lipid cycle reactions in the biosynthesis of the cell wall peptidoglycan: transfers peptidoglycan precursor phospho-MurNAc-pentapeptide from UDP-MurNAc-pentapeptide onto the lipid carrier undecaprenyl phosphate, yielding undecaprenyl-pyrophosphoryl-MurNAc-pentapeptide, known as lipid I. The sequence is that of Phospho-N-acetylmuramoyl-pentapeptide-transferase from Cellvibrio japonicus (strain Ueda107) (Pseudomonas fluorescens subsp. cellulosa).